A 1331-amino-acid chain; its full sequence is MFDVNLFDELRIGLATAEDIRRWSKGEVKKPETINYRTLKPEKDGLFCERIFGPTRDWECACGKYKRVRYKGIICERCGVEVTKSKVRRERMGHIELAAPVTHIWYFKGVPSRLGYLLDLAPKDLERIIYFAANIITSVDEEARHNDQSTLEAEMLLEKKDVEDDVEAEIAERAAKLEQDLAELEAAGAKADARRKVQNAADKEMQHIRERGEREVARLDEIWNTFIKLAPKQMIIDETIYEELVDRYEDYFTGGMGAEAIQTLIRNFDLEAEAEELKEIINNGKGQKKMRALKRLKVVAAFLRSGNDPAGMVLDAIPVIPPELRPMVQLDGGRFATSDLNDLYRRVINRNNRLKRMIDLGAPEIIVNNEKRMLQESVDALFDNGRRGRPVTGPGNRPLKSLSDLLKGKQGRFRQNLLGKRVDYSGRSVIIVGPQLKLHECGLPKLMALELFKPFVMKRLVENDYAQNIKSAKRMVERQRPEVWDVLEEAISEHPVMLNRAPTLHRLGIQAFEPKLVEGKAIQLHPLACEAFNADFDGDQMAVHLPLSAEAQAEARVLMLASNNILSPASGKPLAMPRLDMVTGLYYLTMDKGEDEIGGEGRYQPATEDRPEQGVYSSYAEAIMARDRGVLGLQAPIKVRISHLRPPSDIEAEQFPDGWQKGQAWLAETTLGRIMFNDLLPWNYPYLEGVMVRKGGAGNKMLLGDVINDLAAKYPMITVAQVLDKMKDAGFYWATRSGVTITMHDVLVLPNKTEVLESYEKEAERIERKYWEQGALTERERYDRLVELWKDATDTVGNAVEEMYPDDNPIPMIVKSGAAGNMRQIWTLAGMKGMVVNSKGDYITRPIKTSFREGLSVLEYFNNSHGSRKGLADTALRTADSGYLTRRLVDVAQDVIVREEDCGTRQGVRVPLGIEVAPGSYDLHELWETSASGRVVANDVKDENGEVIAEAGTDLTEELSRTIVNAGVLEIKVRSVLTCQTPAGVCAKCYGKSMASGQLVDIGEAVGIVAAQSIGEPGTQLTMRTFHQGGVGGDITGGLPRVQELFEARNPKNRAPIASVDGTVSLSDEGNFWTLTITPDDGSDNVVYEKLSKRQGLAQVRRPMESNPDAMIERSLRDGDHVSTGDRLMRGAPDPHDVLEVLGRRGVEKHLIDEVQAVYRAQGVAIHDKHIEIIIRQMLRRGTVIDAGTTDLLPGNLIDLSEAKQVNAAQVAEGGQPAQLRSEIMGITKASLATESWLSAASFQETTRVLTDAAINKRSDQLIGLKENVIIGKLIPAGTGISRYRNISVKPTEAARNAAYSIPTYGDSIYGDDGFGEFTGASVPLEEDYTF.

Zn(2+) is bound by residues Cys60, Cys62, Cys75, and Cys78. Positions 535, 537, and 539 each coordinate Mg(2+). 4 residues coordinate Zn(2+): Cys902, Cys979, Cys986, and Cys989.

It belongs to the RNA polymerase beta' chain family. The RNAP catalytic core consists of 2 alpha, 1 beta, 1 beta' and 1 omega subunit. When a sigma factor is associated with the core the holoenzyme is formed, which can initiate transcription. The cofactor is Mg(2+). Requires Zn(2+) as cofactor.

It catalyses the reaction RNA(n) + a ribonucleoside 5'-triphosphate = RNA(n+1) + diphosphate. Its function is as follows. DNA-dependent RNA polymerase catalyzes the transcription of DNA into RNA using the four ribonucleoside triphosphates as substrates. This chain is DNA-directed RNA polymerase subunit beta', found in Corynebacterium aurimucosum (strain ATCC 700975 / DSM 44827 / CIP 107346 / CN-1) (Corynebacterium nigricans).